The sequence spans 218 residues: Small ribosomal subunit protein uS3c (218 aa).

The 71-residue stretch at 39 to 109 (IRNYVKVNLS…QIRINVTELK (71 aa)) folds into the KH type-2 domain.

Belongs to the universal ribosomal protein uS3 family. Part of the 30S ribosomal subunit.

The protein resides in the plastid. Its subcellular location is the chloroplast. In Rhodomonas salina (Cryptomonas salina), this protein is Small ribosomal subunit protein uS3c (rps3).